Here is a 119-residue protein sequence, read N- to C-terminus: MPRVKRGFKARRRRNRVLNQTEGYFLGRKNRFRQAVEVLRHAWEYGYISRKLKKRDFRRLWITRINAAARLNGTTYSRLVSGLKKAGIALDRKILSEIAIHDPASFGAVAKLASPAAAK.

It belongs to the bacterial ribosomal protein bL20 family.

Its function is as follows. Binds directly to 23S ribosomal RNA and is necessary for the in vitro assembly process of the 50S ribosomal subunit. It is not involved in the protein synthesizing functions of that subunit. The sequence is that of Large ribosomal subunit protein bL20 from Sorangium cellulosum (strain So ce56) (Polyangium cellulosum (strain So ce56)).